A 144-amino-acid polypeptide reads, in one-letter code: Urease subunit beta (144 aa).

Low complexity predominate over residues 110–119; it reads HAAPAAPAIP. Residues 110-144 are disordered; it reads HAAPAAPAIPARHESAAGDAPSPLKERAGFDNETR. Residues 133 to 144 are compositionally biased toward basic and acidic residues; the sequence is LKERAGFDNETR.

Belongs to the urease beta subunit family. As to quaternary structure, heterotrimer of UreA (gamma), UreB (beta) and UreC (alpha) subunits. Three heterotrimers associate to form the active enzyme.

It localises to the cytoplasm. It carries out the reaction urea + 2 H2O + H(+) = hydrogencarbonate + 2 NH4(+). It participates in nitrogen metabolism; urea degradation; CO(2) and NH(3) from urea (urease route): step 1/1. In Micrococcus luteus (strain ATCC 4698 / DSM 20030 / JCM 1464 / CCM 169 / CCUG 5858 / IAM 1056 / NBRC 3333 / NCIMB 9278 / NCTC 2665 / VKM Ac-2230) (Micrococcus lysodeikticus), this protein is Urease subunit beta.